A 275-amino-acid chain; its full sequence is Large ribosomal subunit protein uL2c (275 aa).

The tract at residues 219 to 254 (TVRGSVMNPCDHPHGGGEGRAPIGRTRPLTPWGKPA) is disordered.

Belongs to the universal ribosomal protein uL2 family. In terms of assembly, part of the 50S ribosomal subunit.

It is found in the plastid. The protein localises to the chloroplast. The protein is Large ribosomal subunit protein uL2c (rpl2) of Phaeodactylum tricornutum (strain CCAP 1055/1).